A 427-amino-acid chain; its full sequence is Trigger factor (427 aa).

In terms of domain architecture, PPIase FKBP-type spans 163–248 (GDTVVIDFVG…VHEVKAKEVP (86 aa)).

It belongs to the FKBP-type PPIase family. Tig subfamily.

The protein resides in the cytoplasm. It carries out the reaction [protein]-peptidylproline (omega=180) = [protein]-peptidylproline (omega=0). Its function is as follows. Involved in protein export. Acts as a chaperone by maintaining the newly synthesized protein in an open conformation. Functions as a peptidyl-prolyl cis-trans isomerase. The chain is Trigger factor from Streptococcus equi subsp. zooepidemicus (strain H70).